The sequence spans 336 residues: Anthranilate phosphoribosyltransferase (336 aa).

Residues Gly-79, 82–83 (GD), Thr-87, 89–92 (NIST), 107–115 (KHGNRAMSS), and Ser-119 contribute to the 5-phospho-alpha-D-ribose 1-diphosphate site. Gly-79 is an anthranilate binding site. Ser-91 provides a ligand contact to Mg(2+). Asn-110 is a binding site for anthranilate. Arg-165 is an anthranilate binding site. Mg(2+) is bound by residues Asp-225 and Glu-226.

This sequence belongs to the anthranilate phosphoribosyltransferase family. In terms of assembly, homodimer. It depends on Mg(2+) as a cofactor.

It carries out the reaction N-(5-phospho-beta-D-ribosyl)anthranilate + diphosphate = 5-phospho-alpha-D-ribose 1-diphosphate + anthranilate. Its pathway is amino-acid biosynthesis; L-tryptophan biosynthesis; L-tryptophan from chorismate: step 2/5. Functionally, catalyzes the transfer of the phosphoribosyl group of 5-phosphorylribose-1-pyrophosphate (PRPP) to anthranilate to yield N-(5'-phosphoribosyl)-anthranilate (PRA). This Dictyoglomus thermophilum (strain ATCC 35947 / DSM 3960 / H-6-12) protein is Anthranilate phosphoribosyltransferase.